The following is a 166-amino-acid chain: VHRCLGVLRPLHSLRWGRARYARRVAAVVWVLVLACQAPVLYFVTTSVRGTRITCHDTSARELFSHFVAYSSVMLSLLFAVPFSVILVCYVLMARRLLKPAYGTTGGLPRAKRKSVRTIALVLAVFTLCFLPFHVTRTLYYSFRSLDLSCHTLNAINMAYKITRPL.

Over 1–24 the chain is Cytoplasmic; the sequence is VHRCLGVLRPLHSLRWGRARYARR. Residues 25 to 45 traverse the membrane as a helical segment; the sequence is VAAVVWVLVLACQAPVLYFVT. At 46 to 72 the chain is on the extracellular side; it reads TSVRGTRITCHDTSARELFSHFVAYSS. A helical membrane pass occupies residues 73–93; sequence VMLSLLFAVPFSVILVCYVLM. The Cytoplasmic segment spans residues 94–115; that stretch reads ARRLLKPAYGTTGGLPRAKRKS. A helical transmembrane segment spans residues 116-136; sequence VRTIALVLAVFTLCFLPFHVT. Topologically, residues 137–159 are extracellular; it reads RTLYYSFRSLDLSCHTLNAINMA. A helical transmembrane segment spans residues 160-166; it reads YKITRPL.

Belongs to the G-protein coupled receptor 1 family.

Its subcellular location is the cell membrane. Receptor for ATP and UTP coupled to G-proteins that activate a phosphatidylinositol-calcium second messenger system. The protein is P2Y purinoceptor 2 (P2RY2) of Cricetulus griseus (Chinese hamster).